Consider the following 128-residue polypeptide: Small ribosomal subunit protein uS12 (128 aa).

Residue Asp89 is modified to 3-methylthioaspartic acid. The tract at residues 101–128 is disordered; it reads SLDTSGVADRRNGRSKYGAKRPKEGAKK.

This sequence belongs to the universal ribosomal protein uS12 family. Part of the 30S ribosomal subunit. Contacts proteins S8 and S17. May interact with IF1 in the 30S initiation complex.

Its function is as follows. With S4 and S5 plays an important role in translational accuracy. In terms of biological role, interacts with and stabilizes bases of the 16S rRNA that are involved in tRNA selection in the A site and with the mRNA backbone. Located at the interface of the 30S and 50S subunits, it traverses the body of the 30S subunit contacting proteins on the other side and probably holding the rRNA structure together. The combined cluster of proteins S8, S12 and S17 appears to hold together the shoulder and platform of the 30S subunit. In Chloroherpeton thalassium (strain ATCC 35110 / GB-78), this protein is Small ribosomal subunit protein uS12.